Consider the following 862-residue polypeptide: Kinesin-like protein KIN-7J (862 aa).

A Kinesin motor domain is found at 9 to 331; that stretch reads RIVVSVRLRP…LLFANCAKDV (323 aa). Position 95 to 102 (95 to 102) interacts with ATP; sequence GQTSSGKT. Residues 340 to 415 are a coiled coil; sequence VMSDKALVKH…NFRKVASDGD (76 aa). 2 stretches are compositionally biased toward basic and acidic residues: residues 475–499 and 518–531; these read EEHE…KEVQ and PEKK…KHSE. 2 disordered regions span residues 475–532 and 596–643; these read EEHE…HSES and DDSA…STCN. Residues 598–610 show a composition bias toward polar residues; the sequence is SASTTPSSETFRY. Residues 613 to 629 show a composition bias toward basic and acidic residues; the sequence is RRPEKVRKSLSPDEIAD.

This sequence belongs to the TRAFAC class myosin-kinesin ATPase superfamily. Kinesin family. KIN-7 subfamily.

The protein is Kinesin-like protein KIN-7J of Oryza sativa subsp. japonica (Rice).